The primary structure comprises 370 residues: Aspartate beta-hydroxylase domain-containing protein 2 (370 aa).

Topologically, residues 1-57 (MVWALPRTSSPSCIAPSYKPDSGWIKMSAEWLIDWSCLLNGLRDLIAGCIQAVRDCN) are cytoplasmic. A helical membrane pass occupies residues 58-78 (SFALTTVICLLMLFAWYCYRV). At 79 to 370 (GKDQPRSPFA…ALDSIFAPGR (292 aa)) the chain is on the lumenal side. Asn-212 carries N-linked (GlcNAc...) asparagine glycosylation. 2-oxoglutarate contacts are provided by Trp-229 and Ser-273. Residue His-284 participates in Fe cation binding. 2-oxoglutarate is bound at residue 293-295 (RCH). His-329 serves as a coordination point for Fe cation. Arg-342 lines the 2-oxoglutarate pocket.

The protein belongs to the aspartyl/asparaginyl beta-hydroxylase family. Fe cation is required as a cofactor.

It localises to the membrane. Functionally, may function as 2-oxoglutarate-dependent dioxygenase. The sequence is that of Aspartate beta-hydroxylase domain-containing protein 2 (asphd2) from Xenopus tropicalis (Western clawed frog).